Here is a 131-residue protein sequence, read N- to C-terminus: Glycine cleavage system H protein (131 aa).

Residues 24–106 (RAIVGVSDHA…YGEGWIMVIE (83 aa)) form the Lipoyl-binding domain. Lysine 65 carries the N6-lipoyllysine modification.

It belongs to the GcvH family. As to quaternary structure, the glycine cleavage system is composed of four proteins: P, T, L and H. (R)-lipoate is required as a cofactor.

In terms of biological role, the glycine cleavage system catalyzes the degradation of glycine. The H protein shuttles the methylamine group of glycine from the P protein to the T protein. The polypeptide is Glycine cleavage system H protein (Xylella fastidiosa (strain Temecula1 / ATCC 700964)).